The sequence spans 257 residues: Deoxyribose-phosphate aldolase (257 aa).

Aspartate 102 acts as the Proton donor/acceptor in catalysis. Lysine 166 (schiff-base intermediate with acetaldehyde) is an active-site residue. The Proton donor/acceptor role is filled by lysine 198.

Belongs to the DeoC/FbaB aldolase family. DeoC type 2 subfamily.

The protein localises to the cytoplasm. The enzyme catalyses 2-deoxy-D-ribose 5-phosphate = D-glyceraldehyde 3-phosphate + acetaldehyde. The protein operates within carbohydrate degradation; 2-deoxy-D-ribose 1-phosphate degradation; D-glyceraldehyde 3-phosphate and acetaldehyde from 2-deoxy-alpha-D-ribose 1-phosphate: step 2/2. Its function is as follows. Catalyzes a reversible aldol reaction between acetaldehyde and D-glyceraldehyde 3-phosphate to generate 2-deoxy-D-ribose 5-phosphate. The polypeptide is Deoxyribose-phosphate aldolase (Shewanella sediminis (strain HAW-EB3)).